We begin with the raw amino-acid sequence, 158 residues long: Large ribosomal subunit protein bL19 (158 aa).

The segment at 1 to 35 (MTADSKDTSMSEDNTETATAIENSSAMVTDVTSKS) is disordered. Residues 16 to 35 (ETATAIENSSAMVTDVTSKS) show a composition bias toward polar residues.

The protein belongs to the bacterial ribosomal protein bL19 family.

This protein is located at the 30S-50S ribosomal subunit interface and may play a role in the structure and function of the aminoacyl-tRNA binding site. This chain is Large ribosomal subunit protein bL19, found in Prochlorococcus marinus (strain MIT 9313).